The sequence spans 330 residues: Peptide transport system ATP-binding protein SapD (330 aa).

The region spanning 6 to 259 (IRNLTIEFKT…PHHPYTQALI (254 aa)) is the ABC transporter domain. Residue 40-47 (GESGSGKS) participates in ATP binding.

It belongs to the ABC transporter superfamily.

It localises to the cell inner membrane. Functionally, involved in a peptide intake transport system that plays a role in the resistance to antimicrobial peptides. The polypeptide is Peptide transport system ATP-binding protein SapD (Salmonella typhimurium (strain LT2 / SGSC1412 / ATCC 700720)).